The chain runs to 65 residues: MKFKDINVKPVAELEQMVNDLKAELFTLRFQNSTGQLDQTHKIKMVRQDIAKVLTALSQKNRGAQ.

This sequence belongs to the universal ribosomal protein uL29 family.

The protein is Large ribosomal subunit protein uL29 of Mycoplasmopsis pulmonis (strain UAB CTIP) (Mycoplasma pulmonis).